The primary structure comprises 470 residues: MAKKKTSSSMARSQLAALLISLCFLSLASNAVGWSRRGEREEEDERRRHGGEGGRPYHLGEESFRHWTRTRHGRFSVLERFPDEQVVGAAVGGYRVAVLEAAPRAFLQPSHYDADEVFYVKEGEGVIVLLREGRRESFCVREGDAMVIPAGAIVYSANTHSSKWFRVVMLLNPVSTPGHFEEYFPVGGDRPESFFSAFSDDVLQAAFNTRREELEKVFERQREGGEITTAPEEQIRELSKSCSRGGGGGSGSEWEIKPSSLTGKSPYFSNNHGKLFELTGDECRHLKKLDLQIGLANITRGSMIAPNYNTRATKLAVVLQGSGYFEMACPHVSGGGSSERREREREHGRRREEEQGEEEHGERGEKARRYHKVRAQVREESVIVIPASHPATIVASEGESLAVVCFFVGANHDEKVFLAGRNSPLRQLDDPAKKLVFGGSAAREADRVLAAQPEQILLRGPHGRGSVSDM.

The first 34 residues, 1-34 (MAKKKTSSSMARSQLAALLISLCFLSLASNAVGW), serve as a signal peptide directing secretion. Residues 36-52 (RRGEREEEDERRRHGGE) show a composition bias toward basic and acidic residues. Disordered regions lie at residues 36 to 59 (RRGE…PYHL) and 240 to 261 (KSCS…PSSL). Cupin type-1 domains are found at residues 57-215 (YHLG…EELE) and 259-445 (SSLT…AREA). A glycan (N-linked (GlcNAc...) asparagine) is linked at Asn-297. The disordered stretch occupies residues 330-368 (PHVSGGGSSERREREREHGRRREEEQGEEEHGERGEKAR). Over residues 338-367 (SERREREREHGRRREEEQGEEEHGERGEKA) the composition is skewed to basic and acidic residues. Zn(2+) is bound by residues His-347, Glu-352, and His-360.

It belongs to the 7S seed storage protein family. In terms of assembly, homotrimer. The cofactor is Zn(2+).

It localises to the secreted. Its function is as follows. Seed storage protein. Globulin-like protein that acts as a zinc metalloprotease. Cleaves specifically between Leu-15 and Tyr-16 of insulin B chain, and Gln-1 and Leu-2 of neurotensin (NT) peptide in vitro. May play a role as an initiating endopeptidase in germinating seeds. The polypeptide is Cupincin (Oryza sativa subsp. japonica (Rice)).